We begin with the raw amino-acid sequence, 894 residues long: MILLAVLFLCFISSYSASVKGHTTGLSLNNDRLYKLTYSTEVLLDRGKGKLQDSVGYRISSNVDVALLWRNPDGDDDQLIQITMKDVNVENVNQQRGEKSIFKGKSPSKIMGKENLEALQRPTLLHLIHGKVKEFYSYQNEAVAIENIKRGLASLFQTQLSSGTTNEVDISGNCKVTYQAHQDKVIKIKALDSCKIARSGFTTPNQVLGVSSKATSVTTYKIEDSFVIAVLAEETHNFGLNFLQTIKGKIVSKQKLELKTTEAGPRLMSGKQAAAIIKAVDSKYTAIPIVGQVFQSHCKGCPSLSELWRSTRKYLQPDNLSKAEAVRNFLAFIQHLRTAKKEEILQILKMENKEVLPQLVDAVTSAQTSDSLEAILDFLDFKSDSSIILQERFLYACGFASHPNEELLRALISKFKGSIGSSDIRETVMIITGTLVRKLCQNEGCKLKAVVEAKKLILGGLEKAEKKEDTRMYLLALKNALLPEGIPSLLKYAEAGEGPISHLATTALQRYDLPFITDEVKKTLNRIYHQNRKVHEKTVRTAAAAIILNNNPSYMDVKNILLSIGELPQEMNKYMLAIVQDILRFEMPASKIVRRVLKEMVAHNYDRFSRSGSSSAYTGYIERSPRSASTYSLDILYSGSGILRRSNLNIFQYIGKAGLHGSQVVIEAQGLEALIAATPDEGEENLDSYAGMSAILFDVQLRPVTFFNGYSDLMSKMLSASGDPISVVKGLILLIDHSQELQLQSGLKANIEVQGGLAIDISGAMEFSLWYRESKTRVKNRVTVVITTDITVDSSFVKAGLETSTETEAGLEFISTVQFSQYPFLVCMQMDKDEAPFRQFEKKYERLSTGRGYVSQKRKESVLAGCEFPLHQENSEMCKVVFAPQPDSTSSGWF.

The N-terminal stretch at 1-18 is a signal peptide; that stretch reads MILLAVLFLCFISSYSAS. Positions 28 to 659 constitute a Vitellogenin domain; that stretch reads LNNDRLYKLT…IFQYIGKAGL (632 aa). Residues Cys-174 and Cys-194 are joined by a disulfide bond.

As to quaternary structure, heterodimer; heterodimerizes with the protein disulfide isomerase (P4HB/PDI). Interacts with APOB. Interacts with PRAP1. In terms of tissue distribution, liver and small intestine. Also found in ovary, testis and kidney.

The protein resides in the endoplasmic reticulum. It localises to the golgi apparatus. It carries out the reaction a 1,2-diacyl-sn-glycero-3-phosphocholine(in) = a 1,2-diacyl-sn-glycero-3-phosphocholine(out). The catalysed reaction is a 1,2-diacyl-sn-glycero-3-phosphoethanolamine(in) = a 1,2-diacyl-sn-glycero-3-phosphoethanolamine(out). The enzyme catalyses a cholesterol ester(in) = a cholesterol ester(out). It catalyses the reaction a triacyl-sn-glycerol(in) = a triacyl-sn-glycerol(out). Functionally, catalyzes the transport of triglyceride, cholesteryl ester, and phospholipid between phospholipid surfaces. Required for the assembly and secretion of plasma lipoproteins that contain apolipoprotein B. May be involved in regulating cholesteryl ester biosynthesis in cells that produce lipoproteins. The chain is Microsomal triglyceride transfer protein large subunit (MTTP) from Homo sapiens (Human).